A 474-amino-acid chain; its full sequence is tRNA modification GTPase MnmE (474 aa).

3 residues coordinate (6S)-5-formyl-5,6,7,8-tetrahydrofolate: R35, E92, and K135. Residues 231–396 (GLHVVLAGQP…LRAALLEIAG (166 aa)) form the TrmE-type G domain. A K(+)-binding site is contributed by N241. Residues 241 to 246 (NVGKSS), 260 to 266 (TPIAGTT), 285 to 288 (DTAG), and 377 to 379 (SAR) each bind GTP. A Mg(2+)-binding site is contributed by S245. K(+)-binding residues include T260, I262, and T265. T266 is a binding site for Mg(2+). Residue K474 coordinates (6S)-5-formyl-5,6,7,8-tetrahydrofolate.

This sequence belongs to the TRAFAC class TrmE-Era-EngA-EngB-Septin-like GTPase superfamily. TrmE GTPase family. In terms of assembly, homodimer. Heterotetramer of two MnmE and two MnmG subunits. K(+) is required as a cofactor.

It localises to the cytoplasm. Its function is as follows. Exhibits a very high intrinsic GTPase hydrolysis rate. Involved in the addition of a carboxymethylaminomethyl (cmnm) group at the wobble position (U34) of certain tRNAs, forming tRNA-cmnm(5)s(2)U34. The polypeptide is tRNA modification GTPase MnmE (Ralstonia nicotianae (strain ATCC BAA-1114 / GMI1000) (Ralstonia solanacearum)).